Consider the following 318-residue polypeptide: Receptor homology region, transmembrane domain- and RING domain-containing protein 6 (318 aa).

A signal peptide spans 1–20; it reads MNGSWITILSLLVISQLASS. Residues 22 to 162 are Lumenal-facing; sequence VTLIGKNTFL…LIPGFGISSW (141 aa). Cys-62 and Cys-87 are oxidised to a cystine. The PA domain occupies 70-143; sequence EKGSKFRPSY…RTSGEVLKEY (74 aa). N-linked (GlcNAc...) asparagine glycosylation is present at Asn-121. Residues 163–183 form a helical membrane-spanning segment; it reads SIMAITFVSLLVISAVLASYF. Topologically, residues 184–318 are cytoplasmic; sequence SVRRHRIRQH…DLPIVVRVYL (135 aa). The RING-type; atypical zinc-finger motif lies at 233 to 275; it reads CAICIDDYRVGEILRILPCKHKYHAVCIDSWLGRCRSFCPVCK.

The protein localises to the prevacuolar compartment membrane. Its subcellular location is the protein storage vacuole membrane. Functionally, involved in the trafficking of vacuolar proteins. May function as a sorting receptor for protein trafficking to the protein storage vacuole (PSV). In Arabidopsis thaliana (Mouse-ear cress), this protein is Receptor homology region, transmembrane domain- and RING domain-containing protein 6 (RMR6).